Consider the following 426-residue polypeptide: Mannose-6-phosphate isomerase (426 aa).

Residues Q112, H114, E139, and H277 each coordinate Zn(2+). Residue R296 is part of the active site.

This sequence belongs to the mannose-6-phosphate isomerase type 1 family. The cofactor is Zn(2+).

The protein localises to the cytoplasm. It catalyses the reaction D-mannose 6-phosphate = D-fructose 6-phosphate. It participates in nucleotide-sugar biosynthesis; GDP-alpha-D-mannose biosynthesis; alpha-D-mannose 1-phosphate from D-fructose 6-phosphate: step 1/2. Functionally, involved in the synthesis of the GDP-mannose and dolichol-phosphate-mannose required for a number of critical mannosyl transfer reactions. In Ogataea parapolymorpha (strain ATCC 26012 / BCRC 20466 / JCM 22074 / NRRL Y-7560 / DL-1) (Yeast), this protein is Mannose-6-phosphate isomerase (PMI40).